A 535-amino-acid polypeptide reads, in one-letter code: Alkaline phosphatase, placental type (535 aa).

Residues 1 to 22 form the signal peptide; the sequence is MLGPCMLLLLLLLGLRLQLSLG. Asp-64 contacts Mg(2+). Positions 64 and 114 each coordinate Zn(2+). The Phosphoserine intermediate role is filled by Ser-114. Cysteines 143 and 205 form a disulfide. Asn-144 carries N-linked (GlcNAc...) asparagine glycosylation. Ser-177 serves as a coordination point for Mg(2+). Glu-238 contacts Ca(2+). An N-linked (GlcNAc...) asparagine glycan is attached at Asn-271. 3 residues coordinate Ca(2+): Phe-291, Glu-292, and Asp-307. Glu-333 is a Mg(2+) binding site. Asp-338, His-342, Asp-379, and His-380 together coordinate Zn(2+). The segment at 425–449 is disordered; the sequence is DGARPDVTESESGSPEYRQQSAVPL. Residues 434-446 show a composition bias toward polar residues; it reads SESGSPEYRQQSA. His-454 is a binding site for Zn(2+). Cysteines 489 and 496 form a disulfide. A lipid anchor (GPI-anchor amidated aspartate) is attached at Asp-506. The propeptide at 507–535 is removed in mature form; it reads AAHPGRSVVPALLPLLAGTLLLLETATAP. Residues 513–529 form a helical membrane-spanning segment; it reads SVVPALLPLLAGTLLLL.

Belongs to the alkaline phosphatase family. In terms of assembly, homodimer. Requires Mg(2+) as cofactor. Zn(2+) serves as cofactor. The cofactor is Ca(2+). In terms of tissue distribution, detected in placenta (at protein level).

It is found in the cell membrane. The catalysed reaction is a phosphate monoester + H2O = an alcohol + phosphate. Functionally, alkaline phosphatase that can hydrolyze various phosphate compounds. This chain is Alkaline phosphatase, placental type, found in Homo sapiens (Human).